Here is a 245-residue protein sequence, read N- to C-terminus: Uridylate kinase (245 aa).

Position 13–16 (13–16 (KLSG)) interacts with ATP. A UMP-binding site is contributed by Gly-56. The ATP site is built by Gly-57 and Arg-61. UMP-binding positions include Asp-76 and 138–145 (TGRPFFTT). Residues Asn-166, Tyr-172, and Asp-175 each contribute to the ATP site.

It belongs to the UMP kinase family. In terms of assembly, homohexamer.

It is found in the cytoplasm. It catalyses the reaction UMP + ATP = UDP + ADP. The protein operates within pyrimidine metabolism; CTP biosynthesis via de novo pathway; UDP from UMP (UMPK route): step 1/1. Inhibited by UTP. Functionally, catalyzes the reversible phosphorylation of UMP to UDP. This is Uridylate kinase from Mycoplasma mobile (strain ATCC 43663 / 163K / NCTC 11711) (Mesomycoplasma mobile).